Reading from the N-terminus, the 279-residue chain is Tryptophan 2,3-dioxygenase (279 aa).

Residues 48–52, Tyr110, and Arg114 each bind substrate; that span reads FIVIH. His237 is a heme binding site. A substrate-binding site is contributed by Thr251.

The protein belongs to the tryptophan 2,3-dioxygenase family. In terms of assembly, homotetramer. Heme is required as a cofactor.

It catalyses the reaction L-tryptophan + O2 = N-formyl-L-kynurenine. It participates in amino-acid degradation; L-tryptophan degradation via kynurenine pathway; L-kynurenine from L-tryptophan: step 1/2. Heme-dependent dioxygenase that catalyzes the oxidative cleavage of the L-tryptophan (L-Trp) pyrrole ring and converts L-tryptophan to N-formyl-L-kynurenine. Catalyzes the oxidative cleavage of the indole moiety. In Bacillus anthracis, this protein is Tryptophan 2,3-dioxygenase.